Here is a 360-residue protein sequence, read N- to C-terminus: MSVCYRPPGNETLLSWKGSRATGTAFLLLAALLGLPGNGFVVWSLAGWRPTAGRPLAATLVLHLALADGAVLLLTPLFVAFLSQEAWPLGQVGCKAVYYVCALSMYASVLLTGLLSLQRCLAVTRPFLAPRLRSPALARRLLLGVWLAALVLAVPAAVYRHLWGGRVCQLCHPSPVHAAAHLSLETLTAFVLPFGTVLGCYGVTLARLRGARWGSGRQGTRVGRLVSAIVLAFGLLWAPYHAVNLLQAVAALAPPEGPLARLGGAGQAARAGTTALAFFSSSVNPVLYVFTAGDLLPRAGPRFLTRLFEGSGEARGGSRSREGTMELRTTPKLKVMGQGRGNGDPGGGDGGKTEKDSQEW.

Topologically, residues 1–24 (MSVCYRPPGNETLLSWKGSRATGT) are extracellular. Asn-10 is a glycosylation site (N-linked (GlcNAc...) asparagine). The chain crosses the membrane as a helical span at residues 25–45 (AFLLLAALLGLPGNGFVVWSL). Residues 46–60 (AGWRPTAGRPLAATL) are Cytoplasmic-facing. Residues 61–81 (VLHLALADGAVLLLTPLFVAF) form a helical membrane-spanning segment. The Extracellular portion of the chain corresponds to 82–96 (LSQEAWPLGQVGCKA). The chain crosses the membrane as a helical span at residues 97-117 (VYYVCALSMYASVLLTGLLSL). The Cytoplasmic portion of the chain corresponds to 118-140 (QRCLAVTRPFLAPRLRSPALARR). Residues 141–161 (LLLGVWLAALVLAVPAAVYRH) traverse the membrane as a helical segment. Over 162–185 (LWGGRVCQLCHPSPVHAAAHLSLE) the chain is Extracellular. A helical transmembrane segment spans residues 186-206 (TLTAFVLPFGTVLGCYGVTLA). At 207 to 224 (RLRGARWGSGRQGTRVGR) the chain is on the cytoplasmic side. Residues 225–245 (LVSAIVLAFGLLWAPYHAVNL) form a helical membrane-spanning segment. The Extracellular portion of the chain corresponds to 246 to 275 (LQAVAALAPPEGPLARLGGAGQAARAGTTA). A helical transmembrane segment spans residues 276–296 (LAFFSSSVNPVLYVFTAGDLL). Over 297–360 (PRAGPRFLTR…GKTEKDSQEW (64 aa)) the chain is Cytoplasmic. Residues 311 to 360 (SGEARGGSRSREGTMELRTTPKLKVMGQGRGNGDPGGGDGGKTEKDSQEW) form a disordered region. Residues 338–350 (QGRGNGDPGGGDG) are compositionally biased toward gly residues. A compositionally biased stretch (basic and acidic residues) spans 351–360 (GKTEKDSQEW).

This sequence belongs to the G-protein coupled receptor 1 family.

The protein localises to the cell membrane. Its function is as follows. Low-affinity receptor for leukotrienes including leukotriene B4. Mediates chemotaxis of granulocytes and macrophages. The response is mediated via G-proteins that activate a phosphatidylinositol-calcium second messenger system. The sequence is that of Leukotriene B4 receptor 2 (Ltb4r2) from Mus musculus (Mouse).